The sequence spans 503 residues: uncharacterized protein (503 aa).

This sequence belongs to the Mg-chelatase subunits D/I family. ComM subfamily.

This is an uncharacterized protein from Mycobacterium bovis (strain ATCC BAA-935 / AF2122/97).